We begin with the raw amino-acid sequence, 258 residues long: Imidazole glycerol phosphate synthase subunit HisF (258 aa).

Residues D11 and D130 contribute to the active site.

This sequence belongs to the HisA/HisF family. Heterodimer of HisH and HisF.

The protein resides in the cytoplasm. The enzyme catalyses 5-[(5-phospho-1-deoxy-D-ribulos-1-ylimino)methylamino]-1-(5-phospho-beta-D-ribosyl)imidazole-4-carboxamide + L-glutamine = D-erythro-1-(imidazol-4-yl)glycerol 3-phosphate + 5-amino-1-(5-phospho-beta-D-ribosyl)imidazole-4-carboxamide + L-glutamate + H(+). The protein operates within amino-acid biosynthesis; L-histidine biosynthesis; L-histidine from 5-phospho-alpha-D-ribose 1-diphosphate: step 5/9. Functionally, IGPS catalyzes the conversion of PRFAR and glutamine to IGP, AICAR and glutamate. The HisF subunit catalyzes the cyclization activity that produces IGP and AICAR from PRFAR using the ammonia provided by the HisH subunit. In Photorhabdus laumondii subsp. laumondii (strain DSM 15139 / CIP 105565 / TT01) (Photorhabdus luminescens subsp. laumondii), this protein is Imidazole glycerol phosphate synthase subunit HisF.